Reading from the N-terminus, the 375-residue chain is Growth/differentiation factor 8 (375 aa).

An N-terminal signal peptide occupies residues 1-18 (MQKLQISVYIYLFMLIVA). A propeptide spanning residues 19 to 266 (GPVDLNENSE…VTDTPKRSRR (248 aa)) is cleaved from the precursor. Residue Asn71 is glycosylated (N-linked (GlcNAc...) asparagine). 4 disulfide bridges follow: Cys272/Cys282, Cys281/Cys340, Cys309/Cys372, and Cys313/Cys374.

This sequence belongs to the TGF-beta family. As to quaternary structure, homodimer; disulfide-linked. Interacts with WFIKKN2, leading to inhibit its activity. Interacts with FSTL3. Post-translationally, synthesized as large precursor molecule that undergoes proteolytic cleavage to generate an N-terminal propeptide and a disulfide linked C-terminal dimer, which is the biologically active molecule. The circulating form consists of a latent complex of the C-terminal dimer and other proteins, including its propeptide, which maintain the C-terminal dimer in a latent, inactive state. Ligand activation requires additional cleavage of the prodomain by a tolloid-like metalloproteinase.

The protein resides in the secreted. Acts specifically as a negative regulator of skeletal muscle growth. In Lepus capensis (Brown hare), this protein is Growth/differentiation factor 8 (MSTN).